A 221-amino-acid polypeptide reads, in one-letter code: Histone H1-like protein HC2 (221 aa).

2 stretches are compositionally biased toward basic residues: residues 1–50 and 59–70; these read MLGV…KTVA and PVAKKATAKKAP. The disordered stretch occupies residues 1–70; that stretch reads MLGVQKKRST…AKKATAKKAP (70 aa).

It belongs to the histone H1/H5 family. HCT subfamily.

Might have a role in establishing the nucleoid structure of elementary bodies. The chain is Histone H1-like protein HC2 (hctB) from Chlamydia trachomatis serovar L2 (strain ATCC VR-902B / DSM 19102 / 434/Bu).